We begin with the raw amino-acid sequence, 489 residues long: Putative BTB/POZ domain-containing protein R773 (489 aa).

In terms of domain architecture, BTB spans 3–73; that stretch reads SNIELVITDE…GNTSYKFQDK (71 aa).

Belongs to the mimivirus BTB/WD family.

This chain is Putative BTB/POZ domain-containing protein R773, found in Acanthamoeba polyphaga (Amoeba).